A 164-amino-acid polypeptide reads, in one-letter code: Phosphopantetheine adenylyltransferase (164 aa).

Residue S11 coordinates substrate. ATP is bound by residues 11 to 12 (SF) and H19. 3 residues coordinate substrate: K43, A76, and R90. ATP is bound by residues 91-93 (GLR), E101, and 126-132 (YQHISSS).

This sequence belongs to the bacterial CoaD family. Homohexamer. The cofactor is Mg(2+).

It localises to the cytoplasm. It carries out the reaction (R)-4'-phosphopantetheine + ATP + H(+) = 3'-dephospho-CoA + diphosphate. The protein operates within cofactor biosynthesis; coenzyme A biosynthesis; CoA from (R)-pantothenate: step 4/5. Functionally, reversibly transfers an adenylyl group from ATP to 4'-phosphopantetheine, yielding dephospho-CoA (dPCoA) and pyrophosphate. The chain is Phosphopantetheine adenylyltransferase from Streptococcus sanguinis (strain SK36).